Consider the following 329-residue polypeptide: Isoaspartyl peptidase/L-asparaginase (329 aa).

The active-site Nucleophile is the threonine 173. Substrate contacts are provided by residues 201–204 (RVSD) and 222–225 (TGVG).

Belongs to the Ntn-hydrolase family. In terms of assembly, heterotetramer of two alpha and two beta chains arranged as a dimer of alpha/beta heterodimers. In terms of processing, cleaved into an alpha and beta chain by autocatalysis; this activates the enzyme. The N-terminal residue of the beta subunit is responsible for the nucleophile hydrolase activity.

The enzyme catalyses Cleavage of a beta-linked Asp residue from the N-terminus of a polypeptide.. Its function is as follows. Degrades proteins damaged by L-isoaspartyl residue formation (also known as beta-Asp residues). Probably performs the final step in the degradation of the reserve polymer cyanophycin (depolymerizes the building block L-beta-Asp-Arg). Also has L-asparaginase activity. This Synechocystis sp. (strain ATCC 27184 / PCC 6803 / Kazusa) protein is Isoaspartyl peptidase/L-asparaginase.